The sequence spans 550 residues: Sterol O-acyltransferase 1 (550 aa).

M1 is subject to N-acetylmethionine. The segment at 1 to 36 (MVGEEKMSLRNRLSKSRENPEEDEDQRKPAKESLEA) is disordered. Over 1–138 (MVGEEKMSLR…LDELLEVDHI (138 aa)) the chain is Cytoplasmic. Position 8 is a phosphoserine (S8). Over residues 15-34 (KSRENPEEDEDQRKPAKESL) the composition is skewed to basic and acidic residues. Cholesterol is bound at residue H137. Residues 139–160 (RTIYHMFIALLILFILSTLVVD) form a helical membrane-spanning segment. Topologically, residues 161 to 180 (YIDEGRLVLEFSLLSYAFGK) are lumenal. A helical membrane pass occupies residues 181–206 (FPTVVWTWWIMFLSTFSVPYFLFQRW). Residues 207 to 218 (ATGYSKSSHPLI) lie on the Cytoplasmic side of the membrane. Residues 219–244 (NSLFHGFLFMVFQIGILGFGPTYVVL) form a helical membrane-spanning segment. Topologically, residues 245–252 (AYTLPPAS) are lumenal. The chain crosses the membrane as a helical span at residues 253 to 276 (RFIIIFEQIRFVMKAHSFVRENVP). Residues 277-319 (RVLNSAKEKSSTVPIPTVNQYLYFLFAPTLIYRDSYPRNPTVR) are Cytoplasmic-facing. A helical membrane pass occupies residues 320 to 352 (WGYVAMQFAQVFGCFFYVYYIFERLCAPLFRNI). The Lumenal segment spans residues 353–369 (KQEPFSARVLVLCVFNS). A helical transmembrane segment spans residues 370–395 (ILPGVLILFLTFFAFLHCWLNAFAEM). The Cytoplasmic portion of the chain corresponds to 396 to 443 (LRFGDRMFYKDWWNSTSYSNYYRTWNVVVHDWLYYYAYKDFLWFFSKR). Residues 403–409 (FYKDWWN) carry the FYXDWWN motif motif. Residues N415, R418, N421, H425, Y433, K445, and S456 each contribute to the an acyl-CoA site. Residues 444 to 468 (FKSAAMLAAFAVSAVVHEYALAVCL) traverse the membrane as a helical segment. Residue H460 is part of the active site. Residues 469-474 (SFFYPV) lie on the Lumenal side of the membrane. The helical transmembrane segment at 475 to 490 (LFVLFMFFGMAFNFIV) threads the bilayer. The Cytoplasmic portion of the chain corresponds to 491 to 496 (NDSRKK). Residues 497–528 (PIWNVMMWTSLFLGNGVLLCFYSQEWYARQHC) traverse the membrane as a helical segment. A disulfide bond links C528 and C546. Residues 529–550 (PLKNPTFLDYVRPRSWTCRYVF) are Lumenal-facing.

This sequence belongs to the membrane-bound acyltransferase family. Sterol o-acyltransferase subfamily. As to quaternary structure, may form homo- or heterodimers. Interacts with UBIAD1. Expressed in most tissues, but most strongly in the adrenal gland. Expressed more strongly in liver Kupffer cells than in hepatocytes.

The protein resides in the endoplasmic reticulum membrane. It catalyses the reaction a sterol + a long-chain fatty acyl-CoA = a long-chain 3-hydroxysterol ester + CoA. The catalysed reaction is cholesterol + an acyl-CoA = a cholesterol ester + CoA. It carries out the reaction cholesterol + (9Z)-octadecenoyl-CoA = cholesteryl (9Z-octadecenoate) + CoA. The enzyme catalyses cholesterol + hexadecanoyl-CoA = cholesteryl hexadecanoate + CoA. It catalyses the reaction octadecanoyl-CoA + cholesterol = cholesteryl octadecanoate + CoA. The catalysed reaction is (9Z,12Z)-octadecadienoyl-CoA + cholesterol = cholesteryl (9Z,12Z)-octadecadienoate + CoA. It carries out the reaction (5Z,8Z,11Z,14Z)-eicosatetraenoyl-CoA + cholesterol = cholesteryl (5Z,8Z,11Z,14Z)-eicosatetraenoate + CoA. The enzyme catalyses (9Z)-hexadecenoyl-CoA + cholesterol = cholesteryl (9Z)-hexadecenoate + CoA. It catalyses the reaction (11Z)-octadecenoyl-CoA + cholesterol = cholesteryl (11Z)-octadecenoate + CoA. The catalysed reaction is (7Z)-octadecenoyl-CoA + cholesterol = cholesteryl (7Z)-octadecenoate + CoA. In terms of biological role, catalyzes the formation of fatty acid-cholesterol esters, which are less soluble in membranes than cholesterol. Plays a role in lipoprotein assembly and dietary cholesterol absorption. Preferentially utilizes oleoyl-CoA ((9Z)-octadecenoyl-CoA) as a substrate: shows a higher activity towards an acyl-CoA substrate with a double bond at the delta-9 position (9Z) than towards saturated acyl-CoA or an unsaturated acyl-CoA with a double bond at the delta-7 (7Z) or delta-11 (11Z) positions. This chain is Sterol O-acyltransferase 1 (SOAT1), found in Macaca fascicularis (Crab-eating macaque).